Reading from the N-terminus, the 857-residue chain is Putative disease resistance protein At1g50180 (857 aa).

Residues 27 to 60 (IGDQVKQLQDELKRLNCFLKDADEKQHESERVRN) adopt a coiled-coil conformation. An NB-ARC domain is found at 148-461 (SLREQRQSFP…AEGMVMPVKH (314 aa)). 192-199 (GMGGLGKT) is an ATP binding site. 4 LRR repeats span residues 653 to 678 (MTSL…SLSK), 680 to 703 (LKRL…DVTQ), 754 to 780 (LPNL…NLEN), and 791 to 816 (MMRL…RFLK).

The protein belongs to the disease resistance NB-LRR family.

Its function is as follows. Potential disease resistance protein. The polypeptide is Putative disease resistance protein At1g50180 (Arabidopsis thaliana (Mouse-ear cress)).